A 108-amino-acid chain; its full sequence is Nucleoid-associated protein Bphyt_1827 (108 aa).

Positions 87 to 108 (AQEKMGGMTSGLPLPPGFKLPF) are disordered. Over residues 99 to 108 (PLPPGFKLPF) the composition is skewed to pro residues.

Belongs to the YbaB/EbfC family. In terms of assembly, homodimer.

It localises to the cytoplasm. Its subcellular location is the nucleoid. In terms of biological role, binds to DNA and alters its conformation. May be involved in regulation of gene expression, nucleoid organization and DNA protection. This is Nucleoid-associated protein Bphyt_1827 from Paraburkholderia phytofirmans (strain DSM 17436 / LMG 22146 / PsJN) (Burkholderia phytofirmans).